A 292-amino-acid polypeptide reads, in one-letter code: 2-(5''-triphosphoribosyl)-3'-dephosphocoenzyme-A synthase (292 aa).

Belongs to the CitG/MdcB family.

It catalyses the reaction 3'-dephospho-CoA + ATP = 2'-(5''-triphospho-alpha-D-ribosyl)-3'-dephospho-CoA + adenine. Catalyzes the formation of 2-(5''-triphosphoribosyl)-3'-dephosphocoenzyme-A, the precursor of the prosthetic group of the holo-acyl carrier protein (gamma chain) of citrate lyase, from ATP and dephospho-CoA. The polypeptide is 2-(5''-triphosphoribosyl)-3'-dephosphocoenzyme-A synthase (Escherichia coli O127:H6 (strain E2348/69 / EPEC)).